The chain runs to 308 residues: Aspartate carbamoyltransferase catalytic subunit (308 aa).

Carbamoyl phosphate-binding residues include arginine 55 and threonine 56. Residue lysine 83 coordinates L-aspartate. Positions 105, 133, and 136 each coordinate carbamoyl phosphate. L-aspartate-binding residues include arginine 166 and arginine 220. Carbamoyl phosphate contacts are provided by glycine 261 and proline 262.

It belongs to the aspartate/ornithine carbamoyltransferase superfamily. ATCase family. As to quaternary structure, heterododecamer (2C3:3R2) of six catalytic PyrB chains organized as two trimers (C3), and six regulatory PyrI chains organized as three dimers (R2).

It catalyses the reaction carbamoyl phosphate + L-aspartate = N-carbamoyl-L-aspartate + phosphate + H(+). It participates in pyrimidine metabolism; UMP biosynthesis via de novo pathway; (S)-dihydroorotate from bicarbonate: step 2/3. In terms of biological role, catalyzes the condensation of carbamoyl phosphate and aspartate to form carbamoyl aspartate and inorganic phosphate, the committed step in the de novo pyrimidine nucleotide biosynthesis pathway. The polypeptide is Aspartate carbamoyltransferase catalytic subunit (Chlorobaculum tepidum (strain ATCC 49652 / DSM 12025 / NBRC 103806 / TLS) (Chlorobium tepidum)).